Consider the following 324-residue polypeptide: Dolichyl-phosphate beta-glucosyltransferase (324 aa).

Over 1–7 the chain is Lumenal; sequence MATLLLQ. A helical membrane pass occupies residues 8–28; the sequence is LLGLGVALAAAALILVSIVAF. Topologically, residues 29-324 are cytoplasmic; it reads ITATKMPPCY…WRLKQTRKAS (296 aa).

This sequence belongs to the glycosyltransferase 2 family.

The protein resides in the endoplasmic reticulum membrane. The enzyme catalyses a di-trans,poly-cis-dolichyl phosphate + UDP-alpha-D-glucose = a di-trans,poly-cis-dolichyl beta-D-glucosyl phosphate + UDP. Its pathway is protein modification; protein glycosylation. In terms of biological role, dolichyl-phosphate beta-glucosyltransferase that operates in the biosynthetic pathway of dolichol-linked oligosaccharides, the glycan precursors employed in protein asparagine (N)-glycosylation. The assembly of dolichol-linked oligosaccharides begins on the cytosolic side of the endoplasmic reticulum membrane and finishes in its lumen. The sequential addition of sugars to dolichol pyrophosphate produces dolichol-linked oligosaccharides containing fourteen sugars, including two GlcNAcs, nine mannoses and three glucoses. Once assembled, the oligosaccharide is transferred from the lipid to nascent proteins by oligosaccharyltransferases. Dolichyl-phosphate beta-glucosyltransferase produces dolichyl beta-D-glucosyl phosphate/Dol-P-Glc, the glucose donor substrate used sequentially by ALG6, ALG8 and ALG10 to add glucose residues on top of the Man(9)GlcNAc(2)-PP-Dol structure. These are the three last steps in the biosynthetic pathway of dolichol-linked oligosaccharides to produce Glc(3)Man(9)GlcNAc(2)-PP-Dol. The enzyme is most probably active on the cytoplasmic side of the endoplasmic reticulum while its product Dol-P-Glc is the substrate for ALG6, ALG8 and ALG11 in the lumen of the endoplasmic reticulum. This Mus musculus (Mouse) protein is Dolichyl-phosphate beta-glucosyltransferase.